Reading from the N-terminus, the 228-residue chain is MDNNFKIKDLPKNERPQERLIRYGAEVLSNSELLAVILRTGTKNQNIMMLASSLIKETGGLDQLFNQSIEELTKIKGIGVTKAVQILALSELSKRFKTYKSGNEYKISTPLDVSNLVMEDMKYLKQEKLKILILNTKNIVTYIRDVFIGTLNSSIVHPREIFCEAIKKNGASIIICHNHPSGDPTPSKEDINITLRLKKCGKLIGIDLLDHIIIGENKYVSMKEKGTI.

The region spanning K106–I228 is the MPN domain. Zn(2+) is bound by residues H177, H179, and D190. The short motif at H177–D190 is the JAMM motif element.

Belongs to the UPF0758 family.

The polypeptide is UPF0758 protein CLK_2387 (Clostridium botulinum (strain Loch Maree / Type A3)).